A 168-amino-acid polypeptide reads, in one-letter code: UPF0178 protein RBAM_023530 (168 aa).

This sequence belongs to the UPF0178 family.

This is UPF0178 protein RBAM_023530 from Bacillus velezensis (strain DSM 23117 / BGSC 10A6 / LMG 26770 / FZB42) (Bacillus amyloliquefaciens subsp. plantarum).